The chain runs to 82 residues: Defensin-like protein 75 (82 aa).

The signal sequence occupies residues 1-26; that stretch reads MAKIKSLDVITVAIILLLVIADQATA. Cystine bridges form between Cys33/Cys66, Cys37/Cys55, Cys41/Cys64, and Cys45/Cys65.

The protein belongs to the DEFL family.

It is found in the secreted. The sequence is that of Defensin-like protein 75 (LCR45) from Arabidopsis thaliana (Mouse-ear cress).